We begin with the raw amino-acid sequence, 251 residues long: tRNA (guanine-N(7)-)-methyltransferase (251 aa).

Residues 1 to 43 (MQPNEQPGTGPADTTLEQQDTAAAEVGHPRRIRSFVRRAGRTS) form a disordered region. Residues 29-40 (PRRIRSFVRRAG) are compositionally biased toward basic residues. The S-adenosyl-L-methionine site is built by Glu82, Glu107, Asp134, and Asp157. Asp157 is an active-site residue. Lys161 contacts substrate. The segment at 163 to 168 (RHNKRR) is interaction with RNA. Residues Asp193 and 228 to 231 (TKFE) contribute to the substrate site.

Belongs to the class I-like SAM-binding methyltransferase superfamily. TrmB family.

It catalyses the reaction guanosine(46) in tRNA + S-adenosyl-L-methionine = N(7)-methylguanosine(46) in tRNA + S-adenosyl-L-homocysteine. It functions in the pathway tRNA modification; N(7)-methylguanine-tRNA biosynthesis. In terms of biological role, catalyzes the formation of N(7)-methylguanine at position 46 (m7G46) in tRNA. The chain is tRNA (guanine-N(7)-)-methyltransferase from Ralstonia nicotianae (strain ATCC BAA-1114 / GMI1000) (Ralstonia solanacearum).